We begin with the raw amino-acid sequence, 710 residues long: MVKLAKAGKNQGDPKKMAPPPKEVEEDSEDEEMSEDEEDDSSGEEVVIPQKKGKKAAATSAKKVVVSPTKKVAVATPAKKAAVTPGKKAAATPAKKTVTPAKAVTTPGKKGATPGKALVATPGKKGAAIPAKGAKNGKNAKKEDSDEEEDDDSEEDEEDDEDEDEDEDEIEPAAMKAAAAAPASEDEDDEDDEDDEDDDDDEEDDSEEEAMETTPAKGKKAAKVVPVKAKNVAEDEDEEEDDEDEDDDDDEDDEDDDDEDDEEEEEEEEEEPVKEAPGKRKKEMAKQKAAPEAKKQKVEGTEPTTAFNLFVGNLNFNKSAPELKTGISDVFAKNDLAVVDVRIGMTRKFGYVDFESAEDLEKALELTGLKVFGNEIKLEKPKGKDSKKERDARTLLAKNLPYKVTQDELKEVFEDAAEIRLVSKDGKSKGIAYIEFKTEADAEKTFEEKQGTEIDGRSISLYYTGEKGQNQDYRGGKNSTWSGESKTLVLSNLSYSATEETLQEVFEKATFIKVPQNQNGKSKGYAFIEFASFEDAKEALNSCNKREIEGRAIRLELQGPRGSPNARSQPSKTLFVKGLSEDTTEETLKESFDGSVRARIVTDRETGSSKGFGFVDFNSEEDAKAAKEAMEDGEIDGNKVTLDWAKPKGEGGFGGRGGGRGGFGGRGGGRGGRGGFGGRGRGGFGGRGGFRGGRGGGGDHKPQGKKTKFE.

The segment at 1–303 is disordered; that stretch reads MVKLAKAGKN…KKQKVEGTEP (303 aa). N6-acetyllysine occurs at positions 9, 15, and 16. Positions 24-43 are enriched in acidic residues; the sequence is VEEDSEDEEMSEDEEDDSSG. Residues S28, S34, S41, and S42 each carry the phosphoserine modification. Low complexity predominate over residues 56–107; sequence AAATSAKKVVVSPTKKVAVATPAKKAAVTPGKKAAATPAKKTVTPAKAVTTP. Residues 58 to 65 form repeat 1; sequence ATSAKKVV. Residues 58–135 are 8 X 8 AA tandem repeats of X-T-P-X-K-K-X-X; the sequence is ATSAKKVVVS…GAAIPAKGAK (78 aa). S67 is modified (phosphoserine). T69, T76, T84, and T92 each carry phosphothreonine. 3 repeat units span residues 75-82, 83-90, and 91-98. The residue at position 96 (K96) is an N6-acetyllysine. T99 bears the Phosphothreonine mark. Residues 99-104 form a 5; truncated repeat; it reads TPAKAV. K102 carries the N6-acetyllysine modification. Repeat 6 spans residues 105 to 112; the sequence is TTPGKKGA. Position 106 is a phosphothreonine (T106). An N6-acetyllysine modification is found at K109. T113 carries the phosphothreonine modification. Position 116 is an N6-acetyllysine (K116). 2 tandem repeats follow at residues 120–127 and 128–135. A Phosphothreonine modification is found at T121. Low complexity predominate over residues 122-137; it reads PGKKGAAIPAKGAKNG. K124 carries the post-translational modification N6-acetyllysine. Phosphoserine is present on residues S145 and S153. The segment covering 145-171 has biased composition (acidic residues); it reads SDEEEDDDSEEDEEDDEDEDEDEDEIE. The span at 172–183 shows a compositional bias: low complexity; sequence PAAMKAAAAAPA. Phosphoserine is present on residues S184 and S206. A compositionally biased stretch (acidic residues) spans 184–211; it reads SEDEDDEDDEDDEDDDDDEEDDSEEEAM. Position 214 is a phosphothreonine (T214). A compositionally biased stretch (acidic residues) spans 234-272; that stretch reads EDEDEEEDDEDEDDDDDEDDEDDDDEDDEEEEEEEEEEP. The span at 273-300 shows a compositional bias: basic and acidic residues; it reads VKEAPGKRKKEMAKQKAAPEAKKQKVEG. K297 is covalently cross-linked (Glycyl lysine isopeptide (Lys-Gly) (interchain with G-Cter in SUMO1); alternate). Residue K297 forms a Glycyl lysine isopeptide (Lys-Gly) (interchain with G-Cter in SUMO2); alternate linkage. A Phosphothreonine modification is found at T301. 2 consecutive RRM domains span residues 307–383 and 393–466; these read FNLF…KPKG and RTLL…YTGE. An N6-acetyllysine modification is found at K318. K324 participates in a covalent cross-link: Glycyl lysine isopeptide (Lys-Gly) (interchain with G-Cter in SUMO1); alternate. K324 is covalently cross-linked (Glycyl lysine isopeptide (Lys-Gly) (interchain with G-Cter in SUMO2); alternate). The residue at position 348 (K348) is an N6-acetyllysine. Position 356 is a phosphoserine (S356). Residue T367 is modified to Phosphothreonine. K370 participates in a covalent cross-link: Glycyl lysine isopeptide (Lys-Gly) (interchain with G-Cter in SUMO2). Residue K377 forms a Glycyl lysine isopeptide (Lys-Gly) (interchain with G-Cter in SUMO2); alternate linkage. N6-acetyllysine; alternate is present on K377. Residues K398 and K403 each carry the N6-acetyllysine modification. A Phosphothreonine modification is found at T405. Residues K427 and K444 each carry the N6-acetyllysine modification. Residues S458 and S460 each carry the phosphoserine modification. An N6-acetyllysine mark is found at K467 and K477. Residues 486–560 form the RRM 3 domain; the sequence is KTLVLSNLSY…RAIRLELQGP (75 aa). Residue K513 forms a Glycyl lysine isopeptide (Lys-Gly) (interchain with G-Cter in SUMO2); alternate linkage. K513 is subject to N6-acetyllysine; alternate. K521 is subject to N6-acetyllysine. S563 carries the phosphoserine modification. K572 is modified (N6-acetyllysine). The 76-residue stretch at 572–647 folds into the RRM 4 domain; it reads KTLFVKGLSE…NKVTLDWAKP (76 aa). Residue K577 forms a Glycyl lysine isopeptide (Lys-Gly) (interchain with G-Cter in SUMO2); alternate linkage. Residue K577 is modified to N6-acetyllysine; alternate. Phosphoserine is present on S580. Residue K589 forms a Glycyl lysine isopeptide (Lys-Gly) (interchain with G-Cter in SUMO1); alternate linkage. K589 is covalently cross-linked (Glycyl lysine isopeptide (Lys-Gly) (interchain with G-Cter in SUMO2); alternate). Residues S591 and S619 each carry the phosphoserine modification. K624 participates in a covalent cross-link: Glycyl lysine isopeptide (Lys-Gly) (interchain with G-Cter in SUMO2). The tract at residues 640–710 is disordered; the sequence is VTLDWAKPKG…KPQGKKTKFE (71 aa). Position 646 is an N6-acetyllysine (K646). Residues 650 to 696 show a composition bias toward gly residues; the sequence is EGGFGGRGGGRGGFGGRGGGRGGRGGFGGRGRGGFGGRGGFRGGRGG. Asymmetric dimethylarginine is present on residues R656, R660, R666, R670, R673, R679, R681, R687, and R691. Residue R694 is modified to Asymmetric dimethylarginine; alternate. Omega-N-methylarginine; alternate is present on R694. A compositionally biased stretch (basic and acidic residues) spans 697-710; sequence GGDHKPQGKKTKFE.

In terms of assembly, identified in a IGF2BP1-dependent mRNP granule complex containing untranslated mRNAs. Component of the SWAP complex that consists of NPM1, NCL/nucleolin, PARP1 and SWAP70. Component of a complex which is at least composed of HTATSF1/Tat-SF1, the P-TEFb complex components CDK9 and CCNT1, RNA polymerase II, SUPT5H, and NCL/nucleolin. Interacts with AICDA. Interacts with APTX. Interacts with C1QBP. Interacts with ERBB4. Interacts (via C-terminus) with FMR1 isoform 6 (via N-terminus). Interacts with GZF1; this interaction is important for nucleolar localization of GZF1. Interacts with NSUN2. Interacts with NVL. Interacts (via N-terminus domain) with SETX. Interacts (via RRM1 and C-terminal RRM4/Arg/Gly-rich domains) with TERT; the interaction is important for nucleolar localization of TERT. Interacts with WDR46. Interacts with ZFP36. Interacts with LRRC34. Interacts with RRP1B. Interacts with HNRNPU; this interaction occurs during mitosis. Interacts with RIOK1; RIOK1 recruits NCL to PRMT5 for symmetrically methylation. Interacts with ZBTB7B. Interacts with MDK; this interaction promotes NCL clustering and lateral movements of this complex into lipid rafts leading to MDK internalization. Interacts with HDGF (isoform 1). Interacts with ALKBH2. Interacts with IGFBP5; this interaction is necessary for IGFBP5 localization to the nucleus. Interacts with DDX24 (when ubiquitinated); this interaction may be important during ribosome biogenesis. In terms of processing, some glutamate residues are glycylated by TTLL8. This modification occurs exclusively on glutamate residues and results in a glycine chain on the gamma-carboxyl group. Symmetrically methylated by PRMT5.

It is found in the nucleus. It localises to the nucleolus. Its subcellular location is the cytoplasm. Its function is as follows. Nucleolin is the major nucleolar protein of growing eukaryotic cells. It is found associated with intranucleolar chromatin and pre-ribosomal particles. It induces chromatin decondensation by binding to histone H1. It is thought to play a role in pre-rRNA transcription and ribosome assembly. May play a role in the process of transcriptional elongation. Binds RNA oligonucleotides with 5'-UUAGGG-3' repeats more tightly than the telomeric single-stranded DNA 5'-TTAGGG-3' repeats. The sequence is that of Nucleolin (NCL) from Homo sapiens (Human).